We begin with the raw amino-acid sequence, 83 residues long: Cytochrome b559 subunit alpha (83 aa).

A helical membrane pass occupies residues 21–35 (VIHSITIPSLFIAGW). Histidine 23 is a heme binding site.

It belongs to the PsbE/PsbF family. In terms of assembly, heterodimer of an alpha subunit and a beta subunit. PSII is composed of 1 copy each of membrane proteins PsbA, PsbB, PsbC, PsbD, PsbE, PsbF, PsbH, PsbI, PsbJ, PsbK, PsbL, PsbM, PsbT, PsbX, PsbY, PsbZ, Psb30/Ycf12, at least 3 peripheral proteins of the oxygen-evolving complex and a large number of cofactors. It forms dimeric complexes. Heme b serves as cofactor.

It is found in the plastid. The protein localises to the chloroplast thylakoid membrane. In terms of biological role, this b-type cytochrome is tightly associated with the reaction center of photosystem II (PSII). PSII is a light-driven water:plastoquinone oxidoreductase that uses light energy to abstract electrons from H(2)O, generating O(2) and a proton gradient subsequently used for ATP formation. It consists of a core antenna complex that captures photons, and an electron transfer chain that converts photonic excitation into a charge separation. In Phalaenopsis aphrodite subsp. formosana (Moth orchid), this protein is Cytochrome b559 subunit alpha.